We begin with the raw amino-acid sequence, 336 residues long: Dihydroorotate dehydrogenase (quinone) (336 aa).

FMN contacts are provided by residues 62-66 (AGLDK) and threonine 86. Lysine 66 provides a ligand contact to substrate. 111–115 (NRMGF) contacts substrate. FMN contacts are provided by asparagine 139 and asparagine 172. Asparagine 172 provides a ligand contact to substrate. Serine 175 acts as the Nucleophile in catalysis. Position 177 (asparagine 177) interacts with substrate. FMN contacts are provided by lysine 217 and threonine 245. 246–247 (NT) is a substrate binding site. FMN-binding positions include glycine 268, glycine 297, and 318–319 (YS).

Belongs to the dihydroorotate dehydrogenase family. Type 2 subfamily. In terms of assembly, monomer. The cofactor is FMN.

Its subcellular location is the cell membrane. It catalyses the reaction (S)-dihydroorotate + a quinone = orotate + a quinol. The protein operates within pyrimidine metabolism; UMP biosynthesis via de novo pathway; orotate from (S)-dihydroorotate (quinone route): step 1/1. Catalyzes the conversion of dihydroorotate to orotate with quinone as electron acceptor. The sequence is that of Dihydroorotate dehydrogenase (quinone) from Proteus mirabilis (strain HI4320).